Here is a 41-residue protein sequence, read N- to C-terminus: Hemoglobin subunit beta (41 aa).

The Globin domain occupies 1-41 (LGNVLVCVLAHHFGKEFTPQVQAAYQKVVAGVANALAHKYH). An N6-acetyllysine modification is found at lysine 39.

This sequence belongs to the globin family. In terms of assembly, heterotetramer of two alpha chains and two beta chains. In terms of tissue distribution, red blood cells.

Functionally, involved in oxygen transport from the lung to the various peripheral tissues. This Colobus guereza (Mantled guereza) protein is Hemoglobin subunit beta (HBB).